Consider the following 320-residue polypeptide: uncharacterized protein (320 aa).

In terms of domain architecture, FHA spans 22–86; sequence KTIGRSSSFD…IRDLNNKTGT (65 aa). Positions 242-264 are disordered; it reads TDTDTTEEKEEEEEKEEGDDEEG.

This is an uncharacterized protein from Saccharomyces cerevisiae (strain ATCC 204508 / S288c) (Baker's yeast).